Consider the following 323-residue polypeptide: MSGKPPAIFLMGPTAAGKTDLAIELTKVLPCELISVDSALVYRGMDIGSAKPSREVLAAHPHRLIDIRDPAESYSAAQFRTDALQAMAEITARGKVPLLVGGTMLYYKALIDGLADMPPADAAVRAALEAQAQALGLTELHRQLAEVDPESAARIHPNDPQRLIRALEVFQVSGESMTAHRQRQFAESSGADAGAGGHLPYTVASLAIAPTDRHILHQRIALRFSQMLEQGFVDEVRSLRARSDLHAGLPSIRAVGYRQVWDYLDGKLTENEMRERGIIATRQLAKRQFTWLRGWSDVHWLDSLACDNLSRTLKYLGAISILS.

12–19 (GPTAAGKT) provides a ligand contact to ATP. Substrate is bound at residue 14–19 (TAAGKT). Interaction with substrate tRNA stretches follow at residues 37–40 (DSAL) and 161–165 (QRLIR).

Belongs to the IPP transferase family. Monomer. The cofactor is Mg(2+).

It carries out the reaction adenosine(37) in tRNA + dimethylallyl diphosphate = N(6)-dimethylallyladenosine(37) in tRNA + diphosphate. Catalyzes the transfer of a dimethylallyl group onto the adenine at position 37 in tRNAs that read codons beginning with uridine, leading to the formation of N6-(dimethylallyl)adenosine (i(6)A). This is tRNA dimethylallyltransferase from Pseudomonas putida (strain W619).